The sequence spans 428 residues: uncharacterized protein (428 aa).

The next 12 membrane-spanning stretches (helical) occupy residues 14–34, 55–75, 84–104, 107–127, 149–169, 182–202, 238–258, 272–292, 302–322, 324–344, 361–381, and 392–412; these read LYDWANSAYSIVVTTAVFPLF, YTIAISTFILAMLGPILGTIA, FFGFFVSAGVASTAMLAFIPS, WLLLLLFYTVSAIGFSGANVF, FGLGYIGSTIPFIISIAVILL, ASQLSFFITAAWWGLFTIPMI, LFLFLLAYFFYIDGVGTIITM, SLLIILFVTQVVAAPFSIIYG, TMLYVGIVIYMIVCVYAYFME, TLDFWILAMLVATSQGGIQAL, FFGFYNIFGKFASIMGPLLIA, and TAVFSLIILFVIGIVILAFVP.

Belongs to the major facilitator superfamily.

It localises to the cell membrane. This is an uncharacterized protein from Bacillus subtilis (strain 168).